The chain runs to 859 residues: DNA mismatch repair protein MutS (859 aa).

An ATP-binding site is contributed by 622 to 629 (GPNMGGKS).

Belongs to the DNA mismatch repair MutS family.

Its function is as follows. This protein is involved in the repair of mismatches in DNA. It is possible that it carries out the mismatch recognition step. This protein has a weak ATPase activity. In Syntrophomonas wolfei subsp. wolfei (strain DSM 2245B / Goettingen), this protein is DNA mismatch repair protein MutS.